Consider the following 148-residue polypeptide: Truncated transcription factor CAULIFLOWER C (148 aa).

The MADS-box domain maps to 1 to 61 (MGRGRVEMKR…GKLFEYSSES (61 aa)). The K-box; partial domain occupies 90–148 (QTNWSMEYSRLKAKIELWERNQRHYLGEDLESISIKELQNLEQQLDTSLKHIPSRKVCK).

As to quaternary structure, homodimer capable of binding to CArG-box sequences.

The protein localises to the nucleus. Functionally, probable transcription factor that promotes early floral meristem identity in synergy with APETALA1, FRUITFULL and LEAFY. Is required subsequently for the transition of an inflorescence meristem into a floral meristem. Seems to be partially redundant to the function of APETALA1. The sequence is that of Truncated transcription factor CAULIFLOWER C (CAL-C) from Brassica oleracea var. botrytis (Cauliflower).